Reading from the N-terminus, the 491-residue chain is Protein nucleotidyltransferase YdiU (491 aa).

Gly-94, Gly-96, Arg-97, Lys-117, Asp-129, Gly-130, Arg-180, and Arg-187 together coordinate ATP. The active-site Proton acceptor is Asp-256. Residues Asn-257 and Asp-266 each coordinate Mg(2+). Asp-266 is an ATP binding site.

This sequence belongs to the SELO family. Mg(2+) is required as a cofactor. The cofactor is Mn(2+).

The catalysed reaction is L-seryl-[protein] + ATP = 3-O-(5'-adenylyl)-L-seryl-[protein] + diphosphate. It catalyses the reaction L-threonyl-[protein] + ATP = 3-O-(5'-adenylyl)-L-threonyl-[protein] + diphosphate. The enzyme catalyses L-tyrosyl-[protein] + ATP = O-(5'-adenylyl)-L-tyrosyl-[protein] + diphosphate. It carries out the reaction L-histidyl-[protein] + UTP = N(tele)-(5'-uridylyl)-L-histidyl-[protein] + diphosphate. The catalysed reaction is L-seryl-[protein] + UTP = O-(5'-uridylyl)-L-seryl-[protein] + diphosphate. It catalyses the reaction L-tyrosyl-[protein] + UTP = O-(5'-uridylyl)-L-tyrosyl-[protein] + diphosphate. Functionally, nucleotidyltransferase involved in the post-translational modification of proteins. It can catalyze the addition of adenosine monophosphate (AMP) or uridine monophosphate (UMP) to a protein, resulting in modifications known as AMPylation and UMPylation. This chain is Protein nucleotidyltransferase YdiU, found in Clostridium botulinum (strain Loch Maree / Type A3).